A 195-amino-acid chain; its full sequence is UPF0301 protein CCNA_03506 (195 aa).

The protein belongs to the UPF0301 (AlgH) family.

The polypeptide is UPF0301 protein CCNA_03506 (Caulobacter vibrioides (strain NA1000 / CB15N) (Caulobacter crescentus)).